We begin with the raw amino-acid sequence, 140 residues long: ATP synthase epsilon chain (140 aa).

Belongs to the ATPase epsilon chain family. F-type ATPases have 2 components, CF(1) - the catalytic core - and CF(0) - the membrane proton channel. CF(1) has five subunits: alpha(3), beta(3), gamma(1), delta(1), epsilon(1). CF(0) has three main subunits: a, b and c.

It is found in the cell inner membrane. Functionally, produces ATP from ADP in the presence of a proton gradient across the membrane. This Neisseria meningitidis serogroup B (strain ATCC BAA-335 / MC58) protein is ATP synthase epsilon chain.